The following is a 303-amino-acid chain: DCN1-like protein 3 (303 aa).

Disordered regions lie at residues Met1–Ile41 and Glu62–Glu83. A lipid anchor (N-myristoyl glycine) is attached at Gly2. The region spanning Ser85 to Met277 is the DCUN1 domain. The interval Glu284–Thr303 is disordered. Residues Thr294–Thr303 show a composition bias toward polar residues.

As to quaternary structure, may interact (via the DCUN1 domain) with unneddylated cullins.

It is found in the cell membrane. It localises to the cytoplasm. Its subcellular location is the nucleus. The protein localises to the perinuclear region. Functionally, contributes to the neddylation of all cullins by transferring NEDD8 from N-terminally acetylated NEDD8-conjugating E2s enzyme to different cullin C-terminal domain-RBX complexes. At the cell membrane, can promote and as well inhibit cullins neddylation. This chain is DCN1-like protein 3, found in Xenopus tropicalis (Western clawed frog).